Reading from the N-terminus, the 1111-residue chain is Phytochrome C (1111 aa).

The 181-residue stretch at Asn-213–Ala-393 folds into the GAF domain. A phytochromobilin-binding site is contributed by Cys-318. PAS domains follow at residues Ile-604 to Ser-674 and Asp-737 to Arg-808. Residues Tyr-889 to Ile-1111 enclose the Histidine kinase domain.

It belongs to the phytochrome family. Homodimer. Contains one covalently linked phytochromobilin chromophore.

Regulatory photoreceptor which exists in two forms that are reversibly interconvertible by light: the Pr form that absorbs maximally in the red region of the spectrum and the Pfr form that absorbs maximally in the far-red region. Photoconversion of Pr to Pfr induces an array of morphogenic responses, whereas reconversion of Pfr to Pr cancels the induction of those responses. Pfr controls the expression of a number of nuclear genes including those encoding the small subunit of ribulose-bisphosphate carboxylase, chlorophyll A/B binding protein, protochlorophyllide reductase, rRNA, etc. It also controls the expression of its own gene(s) in a negative feedback fashion. The protein is Phytochrome C (PHYC) of Arabidopsis thaliana (Mouse-ear cress).